We begin with the raw amino-acid sequence, 266 residues long: Histidinol-phosphatase (266 aa).

The Mg(2+) site is built by Glu-69, Asp-84, Ile-86, and Asp-87. Residue Glu-69 participates in substrate binding. Substrate is bound by residues 86-89 (IDGT), Arg-190, and Asp-218. Residue Asp-218 participates in Mg(2+) binding.

It belongs to the inositol monophosphatase superfamily. Mg(2+) serves as cofactor.

The enzyme catalyses L-histidinol phosphate + H2O = L-histidinol + phosphate. The protein operates within amino-acid biosynthesis; L-histidine biosynthesis; L-histidine from 5-phospho-alpha-D-ribose 1-diphosphate: step 8/9. Functionally, catalyzes the dephosphorylation of histidinol-phosphate to histidinol, the direct precursor of histidine. In Streptomyces coelicolor (strain ATCC BAA-471 / A3(2) / M145), this protein is Histidinol-phosphatase.